A 201-amino-acid polypeptide reads, in one-letter code: FMN-dependent NADH:quinone oxidoreductase (201 aa).

FMN contacts are provided by residues serine 10, 16 to 18, 95 to 98, and 139 to 142; these read SQS, MYNF, and TTGG.

This sequence belongs to the azoreductase type 1 family. Homodimer. Requires FMN as cofactor.

It catalyses the reaction 2 a quinone + NADH + H(+) = 2 a 1,4-benzosemiquinone + NAD(+). The catalysed reaction is N,N-dimethyl-1,4-phenylenediamine + anthranilate + 2 NAD(+) = 2-(4-dimethylaminophenyl)diazenylbenzoate + 2 NADH + 2 H(+). Functionally, quinone reductase that provides resistance to thiol-specific stress caused by electrophilic quinones. Also exhibits azoreductase activity. Catalyzes the reductive cleavage of the azo bond in aromatic azo compounds to the corresponding amines. This Tolumonas auensis (strain DSM 9187 / NBRC 110442 / TA 4) protein is FMN-dependent NADH:quinone oxidoreductase.